Reading from the N-terminus, the 521-residue chain is Pentatricopeptide repeat-containing protein At4g26680, mitochondrial (521 aa).

A mitochondrion-targeting transit peptide spans 1-38 (MIRISIGVNRRLRYQFSSFAGYSGSENPRLFKTLGAAN). PPR repeat units lie at residues 167–201 (TPRV…GFLP), 202–236 (TVES…KISP), 237–271 (NPYT…GFRA), 272–306 (TDVS…GLQP), 307–341 (NVVT…NVAP), 342–376 (NTVT…GIQR), 377–411 (DILT…NLVP), 412–446 (NSST…GCHP), 447–481 (NEQT…SIPL), and 482–516 (DSRT…KFLQ).

It belongs to the PPR family. P subfamily.

The protein localises to the mitochondrion. This Arabidopsis thaliana (Mouse-ear cress) protein is Pentatricopeptide repeat-containing protein At4g26680, mitochondrial.